The sequence spans 297 residues: MIPLSVRVPASTANVGPGFDSVGIALSLYLDVVVKEKADKWQVIHSFEESIPTDDKNLIVSTACKVCPSISPHIIEVTSNIPLTRGLGSSASAIVAGIEVANQLGDLNLTADQKVQIATNFEGHPDNVAASILGGTVIGALDGKDISVVRIESKELGVISLIPNEELNTDESRSVLPKMFPFHEAVKASAISNVLVAALCQKRWEVVGEMMERDHFHEPYRLELVPLLPSIRKCAKEFGAYGTALSGAGPSIFILTPYEKRQEIAEQLARVFTDMKVCELEIDHKGIIVNKEEHIGL.

P82–S92 is an ATP binding site.

It belongs to the GHMP kinase family. Homoserine kinase subfamily.

Its subcellular location is the cytoplasm. The enzyme catalyses L-homoserine + ATP = O-phospho-L-homoserine + ADP + H(+). It functions in the pathway amino-acid biosynthesis; L-threonine biosynthesis; L-threonine from L-aspartate: step 4/5. Functionally, catalyzes the ATP-dependent phosphorylation of L-homoserine to L-homoserine phosphate. This is Homoserine kinase from Bacillus cereus (strain G9842).